Here is a 348-residue protein sequence, read N- to C-terminus: Protein RecA (348 aa).

66 to 73 (GPESSGKT) lines the ATP pocket.

This sequence belongs to the RecA family.

The protein localises to the cytoplasm. Functionally, can catalyze the hydrolysis of ATP in the presence of single-stranded DNA, the ATP-dependent uptake of single-stranded DNA by duplex DNA, and the ATP-dependent hybridization of homologous single-stranded DNAs. It interacts with LexA causing its activation and leading to its autocatalytic cleavage. This is Protein RecA from Legionella pneumophila (strain Paris).